Consider the following 533-residue polypeptide: Atypical kinase COQ8B, mitochondrial (533 aa).

The helical transmembrane segment at 93–109 threads the bilayer; the sequence is LASFGGLAVGLGLGALA. A KxGQ motif motif is present at residues 156–159; the sequence is KIGQ. One can recognise a Protein kinase domain in the interval 192–424; it reads MMRVLEEELG…DRVLQKSQDL (233 aa). Positions 217 to 220 match the AAAS motif motif; sequence AAAS. ATP is bound by residues Ser220, Lys238, and 325–328; that span reads MELA. Residue Asp368 is the Proton acceptor of the active site. Residues Asn373 and Asp387 each coordinate ATP.

Belongs to the protein kinase superfamily. ADCK protein kinase family. As to quaternary structure, homodimer; homodimerizes via its transmembrane region. Interacts with COQ6 and COQ7. Interacts with the multi-subunit COQ enzyme complex, composed of at least COQ3, COQ4, COQ5, COQ6, COQ7 and COQ9.

The protein resides in the mitochondrion membrane. Its subcellular location is the cytoplasm. It is found in the cytosol. The protein localises to the cell membrane. It functions in the pathway cofactor biosynthesis; ubiquinone biosynthesis. Its function is as follows. Atypical kinase involved in the biosynthesis of coenzyme Q, also named ubiquinone, an essential lipid-soluble electron transporter for aerobic cellular respiration. Its substrate specificity is still unclear: may act as a protein kinase that mediates phosphorylation of COQ3. According to other reports, acts as a small molecule kinase, possibly a lipid kinase that phosphorylates a prenyl lipid in the ubiquinone biosynthesis pathway, as suggested by its ability to bind coenzyme Q lipid intermediates. However, the small molecule kinase activity was not confirmed by another publication. Required for podocyte migration. In Mus musculus (Mouse), this protein is Atypical kinase COQ8B, mitochondrial.